The following is a 375-amino-acid chain: Serpin B5 (375 aa).

Residues Asn99, Asn133, Asn188, Asn298, and Asn361 are each glycosylated (N-linked (GlcNAc...) asparagine).

This sequence belongs to the serpin family. Ov-serpin subfamily. As to quaternary structure, interacts with IRF6.

The protein localises to the secreted. It localises to the extracellular space. Its function is as follows. Tumor suppressor. It blocks the growth, invasion, and metastatic properties of mammary tumors. As it does not undergo the S (stressed) to R (relaxed) conformational transition characteristic of active serpins, it exhibits no serine protease inhibitory activity. The polypeptide is Serpin B5 (Serpinb5) (Rattus norvegicus (Rat)).